A 225-amino-acid polypeptide reads, in one-letter code: U2 small nuclear ribonucleoprotein B'' (225 aa).

Positions 7–86 (HTIYINNMND…KPMRIQYAKT (80 aa)) constitute an RRM 1 domain. Residues 99–145 (ADKEKKKEKKKAKTVEQTATTTNKKPGQGTPNSANTQGNSTPNPQVP) are disordered. Residue K111 is modified to N6-acetyllysine; alternate. K111 participates in a covalent cross-link: Glycyl lysine isopeptide (Lys-Gly) (interchain with G-Cter in SUMO2); alternate. The segment covering 113–123 (VEQTATTTNKK) has biased composition (low complexity). Over residues 127–141 (GTPNSANTQGNSTPN) the composition is skewed to polar residues. The residue at position 151 (Y151) is a Phosphotyrosine. Positions 151–225 (YILFLNNLPE…HAMKITYAKK (75 aa)) constitute an RRM 2 domain.

It belongs to the RRM U1 A/B'' family. As to quaternary structure, identified in the spliceosome B complex. Identified in the spliceosome C complex. Present in a spliceosome complex assembled in vitro, and composed of SNRPB2, HPRP8BP and CRNKL1. Contributes to the binding of stem loop IV of U2 snRNA with SNRPP1.

It localises to the nucleus. Involved in pre-mRNA splicing as component of the spliceosome. Associated with sn-RNP U2, where it contributes to the binding of stem loop IV of U2 snRNA. This is U2 small nuclear ribonucleoprotein B'' (SNRPB2) from Homo sapiens (Human).